The primary structure comprises 1872 residues: Fatty acid synthase beta subunit pkiC (1872 aa).

The acetyltransferase (AT) domain stretch occupies residues 174–425 (VFGGQGECSR…DQSRIPFRDR (252 aa)). Positions 591-836 (NRVLGAPPIM…IIAATPGVSD (246 aa)) are enoyl reductase (ER) domain. The segment at 1111–1132 (TTPASWSTLSLTERDTSEETSD) is disordered. The segment at 1158 to 1597 (PSHPLWMRAL…MPLEKLVVEI (440 aa)) is dehydratase (DH) domain. The region spanning 1518–1617 (PPSNEPYAQL…CFSILAKRKE (100 aa)) is the MaoC-like domain.

This sequence belongs to the fungal fatty acid synthetase subunit beta family. In terms of assembly, [Alpha(6)beta(6)] hexamers of two multifunctional subunits (alpha and beta).

It carries out the reaction acetyl-CoA + n malonyl-CoA + 2n NADPH + 4n H(+) = a long-chain-acyl-CoA + n CoA + n CO2 + 2n NADP(+).. The enzyme catalyses holo-[ACP] + acetyl-CoA = acetyl-[ACP] + CoA. The catalysed reaction is holo-[ACP] + malonyl-CoA = malonyl-[ACP] + CoA. It catalyses the reaction a (3R)-hydroxyacyl-[ACP] = a (2E)-enoyl-[ACP] + H2O. It carries out the reaction a 2,3-saturated acyl-[ACP] + NAD(+) = a (2E)-enoyl-[ACP] + NADH + H(+). The enzyme catalyses (9Z)-octadecenoyl-[ACP] + H2O = (9Z)-octadecenoate + holo-[ACP] + H(+). It participates in secondary metabolite biosynthesis. Fatty acid synthase beta subunit; part of the pki gene cluster that mediates the biosynthesis of 2,4-dihydroxy-3-methyl-6-(2-oxoundecyl)benzaldehyde. The first step in the pathway is the generation of the decanoyl starter unit by the FAS composed of subunits pkiB and pkiC, which is then transferred directly from the FAS to the SAT domain of the non-reducing polyketide synthase pkiA. PkiA condenses the decanoyyl starter unit with 4 malonyl-CoA units and performs one methylation step to yield 2,4-dihydroxy-3-methyl-6-(2-oxoundecyl)benzaldehyde. The sequence is that of Fatty acid synthase beta subunit pkiC from Emericella nidulans (strain FGSC A4 / ATCC 38163 / CBS 112.46 / NRRL 194 / M139) (Aspergillus nidulans).